A 504-amino-acid chain; its full sequence is Cytochrome P450 3A2 (504 aa).

A heme-binding site is contributed by Cys-443.

Belongs to the cytochrome P450 family. Requires heme as cofactor. As to expression, expressed in liver.

It localises to the endoplasmic reticulum membrane. Its subcellular location is the microsome membrane. The enzyme catalyses an organic molecule + reduced [NADPH--hemoprotein reductase] + O2 = an alcohol + oxidized [NADPH--hemoprotein reductase] + H2O + H(+). Cytochromes P450 are a group of heme-thiolate monooxygenases. In liver microsomes, this enzyme is involved in an NADPH-dependent electron transport pathway. It oxidizes a variety of structurally unrelated compounds, including steroids, fatty acids, and xenobiotics. The protein is Cytochrome P450 3A2 (Cyp3a2) of Rattus norvegicus (Rat).